The following is a 330-amino-acid chain: Ferredoxin--NADP reductase 2 (330 aa).

Residues E37, Q45, Y50, V90, F124, D286, and T327 each coordinate FAD.

Belongs to the ferredoxin--NADP reductase type 2 family. In terms of assembly, homodimer. FAD is required as a cofactor.

It catalyses the reaction 2 reduced [2Fe-2S]-[ferredoxin] + NADP(+) + H(+) = 2 oxidized [2Fe-2S]-[ferredoxin] + NADPH. This is Ferredoxin--NADP reductase 2 from Shouchella clausii (strain KSM-K16) (Alkalihalobacillus clausii).